The primary structure comprises 539 residues: GMP synthase [glutamine-hydrolyzing] (539 aa).

The region spanning 4-202 (KILILDFGSQ…VLQIAGAKPD (199 aa)) is the Glutamine amidotransferase type-1 domain. Cysteine 81 functions as the Nucleophile in the catalytic mechanism. Residues histidine 176 and glutamate 178 contribute to the active site. A GMPS ATP-PPase domain is found at 203–395 (WIMKNHIEEA…LGLPPEMVYR (193 aa)). 230–236 (SGGVDSS) contributes to the ATP binding site.

As to quaternary structure, homodimer.

The enzyme catalyses XMP + L-glutamine + ATP + H2O = GMP + L-glutamate + AMP + diphosphate + 2 H(+). It functions in the pathway purine metabolism; GMP biosynthesis; GMP from XMP (L-Gln route): step 1/1. In terms of biological role, catalyzes the synthesis of GMP from XMP. The polypeptide is GMP synthase [glutamine-hydrolyzing] (Burkholderia orbicola (strain AU 1054)).